Consider the following 1077-residue polypeptide: Receptor-type guanylate cyclase daf-11 (1077 aa).

Asparagine 14, asparagine 112, asparagine 149, and asparagine 311 each carry an N-linked (GlcNAc...) asparagine glycan. The helical transmembrane segment at 335 to 355 threads the bilayer; it reads TGVIIAIAVIMGVLLMFIIIL. Positions 355 to 695 constitute a Protein kinase domain; sequence LTTIRKCCNG…LARKIIDTVL (341 aa). The Cytoplasmic segment spans residues 356–1077; sequence TTIRKCCNGS…DSQASTIPDN (722 aa). The region spanning 765–895 is the Guanylate cyclase domain; it reads TILYSDIVGF…EAVILASKME (131 aa). Mg(2+)-binding residues include aspartate 770, isoleucine 771, and aspartate 814. The stretch at 983–1034 forms a coiled coil; that stretch reads KDKMTLAKEKVIAERKNEEERLQRQQTLQEALEEHEEEIEMNEVLVDEDEGE. The segment at 1048 to 1077 is disordered; that stretch reads TQMEELEDEPAGRTIGHGRLDSQASTIPDN.

It belongs to the adenylyl cyclase class-4/guanylyl cyclase family. Expressed in sensory neurons including ASI, ASJ, ASK, AWB and AWC. Expressed in ASJ neurons in the dauer stage.

The protein resides in the cell membrane. The protein localises to the cell projection. It localises to the dendrite. Its subcellular location is the cilium. It is found in the perikaryon. It catalyses the reaction GTP = 3',5'-cyclic GMP + diphosphate. In terms of biological role, guanylate cyclase involved in the production of the second messenger cGMP. In addition, regulates cGMP levels by controlling the transcription of 3',5'-cyclic phosphodiesterase pde-1 and pde-5 mRNAs. Involved in the olfactory, light and pheromone sensing pathways. Part of the chemosensory mechanism of the ASJ sensory neuron that controls dauer formation and dauer recovery. Promotes the calcium flux in ASJ sensory neurons in response to onset and removal of a nitric oxide (NO) stimulus and is thereby required for the behavioral avoidance response to NO-producing organisms like P.aeruginosa. In ASI and ASJ sensory neurons, controls dauer formation and behavioral response to P.aeruginosa by up-regulating the transcription of daf-7, a member of the TGF-beta family. Required for the chemotaxis responses to non-volatile and volatile attractants mediated by the sensory neurons ASE and AWC respectively. Required in ASJ neurons for phototransduction downstream of G protein coupled-photoreceptor lite-1. Plays a role in the development of ASJ sensory neuron axons during late larval stages and in the maintenance of normal axon morphology in adults. Required to maintain the expression of putative olfactory receptor str-2 in one of the two AWC neurons in adults. Regulates, via the production of cGMP, lifespan (in some environmental conditions), sensitivity to oxidative stress and entry into quiescence triggered by satiety. In AWB and AWC sensory neurons, mediates the recognition of food odors which subsequently allows for the detection of preferred food sources. This is Receptor-type guanylate cyclase daf-11 from Caenorhabditis elegans.